We begin with the raw amino-acid sequence, 431 residues long: Serine--tRNA ligase (431 aa).

235 to 237 (TAE) contributes to the L-serine binding site. Residues 266–268 (RRE) and Val282 each bind ATP. Residue Glu289 participates in L-serine binding. 353–356 (EASS) lines the ATP pocket. Ser389 provides a ligand contact to L-serine.

It belongs to the class-II aminoacyl-tRNA synthetase family. Type-1 seryl-tRNA synthetase subfamily. In terms of assembly, homodimer. The tRNA molecule binds across the dimer.

Its subcellular location is the cytoplasm. The catalysed reaction is tRNA(Ser) + L-serine + ATP = L-seryl-tRNA(Ser) + AMP + diphosphate + H(+). It carries out the reaction tRNA(Sec) + L-serine + ATP = L-seryl-tRNA(Sec) + AMP + diphosphate + H(+). It participates in aminoacyl-tRNA biosynthesis; selenocysteinyl-tRNA(Sec) biosynthesis; L-seryl-tRNA(Sec) from L-serine and tRNA(Sec): step 1/1. Catalyzes the attachment of serine to tRNA(Ser). Is also able to aminoacylate tRNA(Sec) with serine, to form the misacylated tRNA L-seryl-tRNA(Sec), which will be further converted into selenocysteinyl-tRNA(Sec). This Pelodictyon phaeoclathratiforme (strain DSM 5477 / BU-1) protein is Serine--tRNA ligase.